The sequence spans 874 residues: UPF0182 protein Sfum_2137 (874 aa).

7 helical membrane-spanning segments follow: residues 7 to 27, 57 to 77, 110 to 130, 171 to 191, 208 to 228, 252 to 272, and 283 to 303; these read WPLIILIGILGISAVVILSSL, IVFGAVTLLFFLIFFLNFWVA, SLWVYTPLSLILAVIIALPIF, RRLLIAFVLLLVGLVALYLLE, LHLSILILLIFLIETWDYVLQ, VIWALIWLTLFFLMGTAFSMI, and PLVVFAVGFVLVLGLRYSAFL.

The protein belongs to the UPF0182 family.

The protein resides in the cell membrane. The protein is UPF0182 protein Sfum_2137 of Syntrophobacter fumaroxidans (strain DSM 10017 / MPOB).